The following is a 523-amino-acid chain: Bifunctional purine biosynthesis protein PurH (523 aa).

Residues 1–154 (MTATAGSNKR…KNHPSVAVVT (154 aa)) enclose the MGS-like domain.

The protein belongs to the PurH family.

The catalysed reaction is (6R)-10-formyltetrahydrofolate + 5-amino-1-(5-phospho-beta-D-ribosyl)imidazole-4-carboxamide = 5-formamido-1-(5-phospho-D-ribosyl)imidazole-4-carboxamide + (6S)-5,6,7,8-tetrahydrofolate. It catalyses the reaction IMP + H2O = 5-formamido-1-(5-phospho-D-ribosyl)imidazole-4-carboxamide. The protein operates within purine metabolism; IMP biosynthesis via de novo pathway; 5-formamido-1-(5-phospho-D-ribosyl)imidazole-4-carboxamide from 5-amino-1-(5-phospho-D-ribosyl)imidazole-4-carboxamide (10-formyl THF route): step 1/1. Its pathway is purine metabolism; IMP biosynthesis via de novo pathway; IMP from 5-formamido-1-(5-phospho-D-ribosyl)imidazole-4-carboxamide: step 1/1. The chain is Bifunctional purine biosynthesis protein PurH from Streptomyces coelicolor (strain ATCC BAA-471 / A3(2) / M145).